A 1009-amino-acid chain; its full sequence is Helicase-like transcription factor (1009 aa).

Arginine 27 carries the omega-N-methylarginine modification. The DNA-binding element occupies 38-287 (EFQDVIPPDD…FSEKDRPENV (250 aa)). A Glycyl lysine isopeptide (Lys-Gly) (interchain with G-Cter in SUMO2) cross-link involves residue lysine 112. Tyrosine 195 is modified (phosphotyrosine; by JAK2). Lysine 211 participates in a covalent cross-link: Glycyl lysine isopeptide (Lys-Gly) (interchain with G-Cter in SUMO2). Position 294–301 (294–301 (DDMGLGKT)) interacts with ATP. Residues 336-365 (DDSMKLGGNNTSEKADGLSKDASRCSEQPS) are disordered. The segment covering 348–359 (EKADGLSKDASR) has biased composition (basic and acidic residues). 3 positions are modified to phosphoserine: serine 397, serine 398, and serine 400. Positions 435 to 606 (IEDVAFACAL…WSLLSFLKLK (172 aa)) constitute a Helicase ATP-binding domain. Positions 557-560 (DEGH) match the DEGH box motif. Residue threonine 736 is modified to Phosphothreonine. The RING-type zinc finger occupies 760 to 801 (CAICLDSLTVPVITHCAHVFCKPCICQVIQNEQPHAKCPLCR). Residues 837–996 (ALMHALTDLR…TKKPNADEMK (160 aa)) form the Helicase C-terminal domain. The tract at residues 925-1009 (SRVFLMDPAW…INEIRTLIDL (85 aa)) is interaction with SP1 and SP3.

It belongs to the SNF2/RAD54 helicase family. RAD16 subfamily. Interacts with SP1 and SP3 independently of DNA; the interaction with these transcriptional factors may be required for basal transcription of target genes. Interacts with EGR1; the interaction requires prior binding to DNA and represses c-Rel via a DNA looping mechanism. Interacts with GATA4. Interacts with PCNA; the interaction promotes polyubiquitination of PCNA through association with the UBE2B-RAD18 and UBE2V2-UBE2N ubiquitin ligase complexes. Interacts with RAD18, SHPRH, UBE2V2 and UBE2N. Expressed in brain, heart, kidney, liver, lung, pancreas, placenta and skeletal muscle.

The protein resides in the cytoplasm. It localises to the nucleus. It is found in the nucleolus. The protein localises to the nucleoplasm. The catalysed reaction is S-ubiquitinyl-[E2 ubiquitin-conjugating enzyme]-L-cysteine + [acceptor protein]-L-lysine = [E2 ubiquitin-conjugating enzyme]-L-cysteine + N(6)-ubiquitinyl-[acceptor protein]-L-lysine.. It participates in protein modification; protein ubiquitination. Functionally, has both helicase and E3 ubiquitin ligase activities. Possesses intrinsic ATP-dependent nucleosome-remodeling activity; This activity may be required for transcriptional activation or repression of specific target promoters. These may include the SERPINE1 and HIV-1 promoters and the SV40 enhancer, to which this protein can bind directly. Plays a role in error-free postreplication repair (PRR) of damaged DNA and maintains genomic stability through acting as a ubiquitin ligase for 'Lys-63'-linked polyubiquitination of chromatin-bound PCNA. The protein is Helicase-like transcription factor (HLTF) of Homo sapiens (Human).